Reading from the N-terminus, the 440-residue chain is Asparagine--tRNA ligase (440 aa).

It belongs to the class-II aminoacyl-tRNA synthetase family. Homodimer.

It localises to the cytoplasm. It catalyses the reaction tRNA(Asn) + L-asparagine + ATP = L-asparaginyl-tRNA(Asn) + AMP + diphosphate + H(+). The sequence is that of Asparagine--tRNA ligase from Roseiflexus castenholzii (strain DSM 13941 / HLO8).